Here is a 210-residue protein sequence, read N- to C-terminus: Putative methyltransferase ECU09_1500 (210 aa).

This sequence belongs to the methyltransferase superfamily.

The sequence is that of Putative methyltransferase ECU09_1500 from Encephalitozoon cuniculi (strain GB-M1) (Microsporidian parasite).